The sequence spans 517 residues: Maturase K (517 aa).

This sequence belongs to the intron maturase 2 family. MatK subfamily.

It is found in the plastid. It localises to the chloroplast. In terms of biological role, usually encoded in the trnK tRNA gene intron. Probably assists in splicing its own and other chloroplast group II introns. The sequence is that of Maturase K from Acer pseudoplatanus (Sycamore maple).